Consider the following 284-residue polypeptide: 2-dehydro-3-deoxyphosphooctonate aldolase (284 aa).

This sequence belongs to the KdsA family.

It localises to the cytoplasm. The enzyme catalyses D-arabinose 5-phosphate + phosphoenolpyruvate + H2O = 3-deoxy-alpha-D-manno-2-octulosonate-8-phosphate + phosphate. The protein operates within carbohydrate biosynthesis; 3-deoxy-D-manno-octulosonate biosynthesis; 3-deoxy-D-manno-octulosonate from D-ribulose 5-phosphate: step 2/3. Its pathway is bacterial outer membrane biogenesis; lipopolysaccharide biosynthesis. This Histophilus somni (strain 2336) (Haemophilus somnus) protein is 2-dehydro-3-deoxyphosphooctonate aldolase.